We begin with the raw amino-acid sequence, 178 residues long: Ribulose bisphosphate carboxylase small subunit, chloroplastic (178 aa).

A chloroplast-targeting transit peptide spans 1 to 54 (MASISSSVATVSRTAPAQANMVAPFTGLKSNAAFPTTKKANDFSTLPSNGGRVQ).

The protein belongs to the RuBisCO small chain family. Heterohexadecamer of 8 large and 8 small subunits.

Its subcellular location is the plastid. It localises to the chloroplast. Functionally, ruBisCO catalyzes two reactions: the carboxylation of D-ribulose 1,5-bisphosphate, the primary event in carbon dioxide fixation, as well as the oxidative fragmentation of the pentose substrate. Both reactions occur simultaneously and in competition at the same active site. Although the small subunit is not catalytic it is essential for maximal activity. This is Ribulose bisphosphate carboxylase small subunit, chloroplastic from Helianthus annuus (Common sunflower).